Consider the following 247-residue polypeptide: Probable phosphatase swp_1620 (247 aa).

Residues His8, His10, His16, His41, Glu74, His102, His132, Asp193, and His195 each coordinate Zn(2+).

This sequence belongs to the PHP family. It depends on Zn(2+) as a cofactor.

The polypeptide is Probable phosphatase swp_1620 (Shewanella piezotolerans (strain WP3 / JCM 13877)).